The primary structure comprises 238 residues: C-reactive protein (238 aa).

A signal peptide spans 1–16; it reads MERFALWFIFLAGSLA. Q17 carries the pyrrolidone carboxylic acid modification. The Pentraxin (PTX) domain maps to 21 to 223; the sequence is VGNVFLFPKP…QATTQPKRQC (203 aa). C52 and C113 form a disulfide bridge. Residues D76, N77, E154, Q155, D156, and Q166 each contribute to the Ca(2+) site.

The protein belongs to the pentraxin family. Homodimer; disulfide-linked. It is not known if it assembles into a pentraxin (or pentaxin) structure. Pentaxins have a discoid arrangement of 5 non-covalently bound subunits. Ca(2+) serves as cofactor. Post-translationally, cys-89 or Cys-223 or Cys-236 could be involved in interchain disulfide linkage.

It localises to the secreted. In terms of biological role, displays several functions associated with host defense: it promotes agglutination, bacterial capsular swelling, phagocytosis, and complement fixation through its calcium-dependent binding to phosphorylcholine. The polypeptide is C-reactive protein (crp) (Xenopus laevis (African clawed frog)).